The sequence spans 188 residues: Mediator of RNA polymerase II transcription subunit 29 (188 aa).

Low complexity-rich tracts occupy residues 1–23 (MNPN…QSSP) and 30–43 (VQHQ…PLQQ). The segment at 1-43 (MNPNMNMMPMSGPQMMQVMQSSPSGPPGPVQHQQQQPPQPLQQ) is disordered.

The protein belongs to the Mediator complex subunit 29 family. Component of the Mediator complex. Self-associates. Interacts with dsx.

Its subcellular location is the nucleus. Functionally, component of the Mediator complex, a coactivator involved in the regulated transcription of nearly all RNA polymerase II-dependent genes. Mediator functions as a bridge to convey information from gene-specific regulatory proteins to the basal RNA polymerase II transcription machinery. Mediator is recruited to promoters by direct interactions with regulatory proteins and serves as a scaffold for the assembly of a functional preinitiation complex with RNA polymerase II and the general transcription factors. Required for female somatic sexual development. The protein is Mediator of RNA polymerase II transcription subunit 29 (ix) of Drosophila melanogaster (Fruit fly).